A 290-amino-acid chain; its full sequence is Lipid phosphate phosphatase 2 (290 aa).

Helical transmembrane passes span 26–46, 69–89, and 93–113; these read WLIL…EPFH, WAVP…YYFI, and VYDL…TGVI. N142 carries an N-linked (GlcNAc...) asparagine glycan. 3 helical membrane-spanning segments follow: residues 162-182, 193-213, and 226-246; these read SFPS…SLYL, GHVA…LVGV, and VFGG…QFFP.

The protein belongs to the PA-phosphatase related phosphoesterase family. As to expression, expressed in roots, stems, leaves, buds, flowers and siliques.

Its subcellular location is the membrane. Its activity is regulated as follows. PA phosphatase activity not inhibited by N-ethylmaleimide. May play a general 'housekeeping role' in lipid metabolism. Exhibits both diacylglycerol pyrophosphate (DGPP) phosphatase and phosphatidate (PA) phosphatase activities with no preference for either substrate. May play a role downstream of the ABA signaling pathway during seed germination and in stomatal movement in leaves. The chain is Lipid phosphate phosphatase 2 (LPP2) from Arabidopsis thaliana (Mouse-ear cress).